An 822-amino-acid polypeptide reads, in one-letter code: Fibroblast growth factor receptor 1 (822 aa).

An N-terminal signal peptide occupies residues Met-1–Ala-21. At Arg-22–Glu-376 the chain is on the extracellular side. The region spanning Pro-25–Ser-119 is the Ig-like C2-type 1 domain. A disulfide bond links Cys-55 and Cys-101. N-linked (GlcNAc...) asparagine glycosylation is found at Asn-77 and Asn-117. Positions Asp-120–Glu-162 are disordered. Residues Ser-125–Ser-135 are compositionally biased toward acidic residues. The span at Ser-136 to Lys-145 shows a compositional bias: basic and acidic residues. Ig-like C2-type domains lie at Pro-158–Asp-246 and Pro-255–Thr-357. The heparin-binding stretch occupies residues Lys-160–Lys-177. Cys-178 and Cys-230 are disulfide-bonded. Asn-227, Asn-240, Asn-264, Asn-296, Asn-317, and Asn-330 each carry an N-linked (GlcNAc...) asparagine glycan. A disulfide bridge links Cys-277 with Cys-341. A helical membrane pass occupies residues Ile-377–Tyr-397. At Lys-398–Arg-822 the chain is on the cytoplasmic side. Position 463 is a phosphotyrosine; by autocatalysis (Tyr-463). A Protein kinase domain is found at Leu-478–Leu-767. ATP contacts are provided by residues Leu-484–Gly-490, Lys-514, Glu-562–Ala-564, and Asn-568. Tyr-583 and Tyr-585 each carry phosphotyrosine; by autocatalysis. Asp-623 acts as the Proton acceptor in catalysis. ATP contacts are provided by Arg-627 and Asp-641. Phosphotyrosine; by autocatalysis occurs at positions 653, 654, 730, and 766. Residues Ser-770–Arg-822 form a disordered region. Positions Asp-776–Glu-792 are enriched in polar residues.

It belongs to the protein kinase superfamily. Tyr protein kinase family. Fibroblast growth factor receptor subfamily. As to quaternary structure, monomer. Homodimer after ligand binding. Interacts predominantly with FGF1 and FGF2, but can also interact with FGF3, FGF4, FGF5, FGF6, FGF8, FGF10, FGF19, FGF21, FGF22 and FGF23 (in vitro). Ligand specificity is determined by tissue-specific expression of isoforms, and differences in the third Ig-like domain are crucial for ligand specificity. Affinity for fibroblast growth factors (FGFs) is increased by heparan sulfate glycosaminoglycans that function as coreceptors. Likewise, KLB increases the affinity for FGF19, FGF21 and FGF23. Interacts (phosphorylated on Tyr-766) with PLCG1 (via SH2 domains). Interacts with FRS2. Interacts (via C-terminus) with NEDD4 (via WW3 domain). Interacts with RPS6KA1. Interacts with KL. Interacts with SHB (via SH2 domain) and GRB10. Interacts with ANOS1; this interaction does not interfere with FGF2-binding to FGFR1, but prevents binding of heparin-bound FGF2. Interacts with SOX2 and SOX3. Interacts with FLRT1, FLRT2 and FLRT3. Found in a ternary complex with FGF1 and ITGAV:ITGB3. Autophosphorylated. Binding of FGF family members together with heparan sulfate proteoglycan or heparin promotes receptor dimerization and autophosphorylation on tyrosine residues. Autophosphorylation occurs in trans between the two FGFR molecules present in the dimer and proceeds in a highly ordered manner. Initial autophosphorylation at Tyr-653 increases the kinase activity by a factor of 50 to 100. After this, Tyr-583 becomes phosphorylated, followed by phosphorylation of Tyr-463, Tyr-766, Tyr-583 and Tyr-585. In a third stage, Tyr-654 is autophosphorylated, resulting in a further tenfold increase of kinase activity. Phosphotyrosine residues provide docking sites for interacting proteins and so are crucial for FGFR1 function and its regulation. Post-translationally, ubiquitinated. FGFR1 is rapidly ubiquitinated by NEDD4 after autophosphorylation, leading to internalization and lysosomal degradation. CBL is recruited to activated FGFR1 via FRS2 and GRB2, and mediates ubiquitination and subsequent degradation of FGFR1. In terms of processing, N-glycosylated in the endoplasmic reticulum. The N-glycan chains undergo further maturation to an Endo H-resistant form in the Golgi apparatus. Expressed in the parathyroid.

The protein resides in the cell membrane. The protein localises to the nucleus. Its subcellular location is the cytoplasm. It localises to the cytosol. It is found in the cytoplasmic vesicle. The enzyme catalyses L-tyrosyl-[protein] + ATP = O-phospho-L-tyrosyl-[protein] + ADP + H(+). Its activity is regulated as follows. Present in an inactive conformation in the absence of bound ligand. Ligand binding leads to dimerization and activation by sequential autophosphorylation on tyrosine residues. In terms of biological role, tyrosine-protein kinase that acts as a cell-surface receptor for fibroblast growth factors and plays an essential role in the regulation of embryonic development, cell proliferation, differentiation and migration. Required for normal mesoderm patterning and correct axial organization during embryonic development, normal skeletogenesis and normal development of the gonadotropin-releasing hormone (GnRH) neuronal system. Phosphorylates PLCG1, FRS2, GAB1 and SHB. Ligand binding leads to the activation of several signaling cascades. Activation of PLCG1 leads to the production of the cellular signaling molecules diacylglycerol and inositol 1,4,5-trisphosphate. Phosphorylation of FRS2 triggers recruitment of GRB2, GAB1, PIK3R1 and SOS1, and mediates activation of RAS, MAPK1/ERK2, MAPK3/ERK1 and the MAP kinase signaling pathway, as well as of the AKT1 signaling pathway. Promotes phosphorylation of SHC1, STAT1 and PTPN11/SHP2. In the nucleus, enhances RPS6KA1 and CREB1 activity and contributes to the regulation of transcription. FGFR1 signaling is down-regulated by IL17RD/SEF, and by FGFR1 ubiquitination, internalization and degradation. This Rattus norvegicus (Rat) protein is Fibroblast growth factor receptor 1 (Fgfr1).